A 456-amino-acid chain; its full sequence is Cysteine synthase 2 (456 aa).

A helical transmembrane segment spans residues 9–29; the sequence is VYGTVALTAAFAAGILVTLGF.

The protein belongs to the cysteine synthase/cystathionine beta-synthase family. Pyridoxal 5'-phosphate serves as cofactor.

Its subcellular location is the mitochondrion outer membrane. It catalyses the reaction O-acetyl-L-serine + hydrogen sulfide = L-cysteine + acetate. Its function is as follows. Putative cysteine synthase that catalyzes the conversion of O-acetyl-L-serine (OAS) into cysteine, the last step in the cysteine biosynthesis pathway. However, in contrast to cysteine synthase cys-17, this CS-like protein may not function in cysteine biosynthesis. This chain is Cysteine synthase 2, found in Neurospora crassa (strain ATCC 24698 / 74-OR23-1A / CBS 708.71 / DSM 1257 / FGSC 987).